Consider the following 416-residue polypeptide: Multifunctional CCA protein (416 aa).

Residues G8 and R11 each contribute to the ATP site. The CTP site is built by G8 and R11. Residues D21 and D23 each coordinate Mg(2+). ATP contacts are provided by R91, R137, and R140. CTP is bound by residues R91, R137, and R140. Positions 228–329 constitute an HD domain; the sequence is TGVHTLMVLA…VKIFDKADFW (102 aa).

The protein belongs to the tRNA nucleotidyltransferase/poly(A) polymerase family. Bacterial CCA-adding enzyme type 1 subfamily. As to quaternary structure, monomer. Can also form homodimers and oligomers. The cofactor is Mg(2+). It depends on Ni(2+) as a cofactor.

The enzyme catalyses a tRNA precursor + 2 CTP + ATP = a tRNA with a 3' CCA end + 3 diphosphate. The catalysed reaction is a tRNA with a 3' CCA end + 2 CTP + ATP = a tRNA with a 3' CCACCA end + 3 diphosphate. Catalyzes the addition and repair of the essential 3'-terminal CCA sequence in tRNAs without using a nucleic acid template. Adds these three nucleotides in the order of C, C, and A to the tRNA nucleotide-73, using CTP and ATP as substrates and producing inorganic pyrophosphate. tRNA 3'-terminal CCA addition is required both for tRNA processing and repair. Also involved in tRNA surveillance by mediating tandem CCA addition to generate a CCACCA at the 3' terminus of unstable tRNAs. While stable tRNAs receive only 3'-terminal CCA, unstable tRNAs are marked with CCACCA and rapidly degraded. This Shewanella baltica (strain OS155 / ATCC BAA-1091) protein is Multifunctional CCA protein.